Consider the following 402-residue polypeptide: NADH dehydrogenase [ubiquinone] 1 alpha subcomplex subunit 9, mitochondrial (402 aa).

Residues 1–43 (MQVVSRRLVQRPLVGGASIYSSSSLRSLYGVSNHLNGTDNCRY) constitute a mitochondrion transit peptide.

Belongs to the complex I NDUFA9 subunit family. In terms of assembly, complex I is composed of at least 49 different subunits. This a component of the hydrophobic protein fraction. It depends on FAD as a cofactor.

The protein localises to the mitochondrion matrix. Functionally, accessory subunit of the mitochondrial membrane respiratory chain NADH dehydrogenase (Complex I), that is believed not to be involved in catalysis. Complex I functions in the transfer of electrons from NADH to the respiratory chain. The immediate electron acceptor for the enzyme is believed to be ubiquinone. This is NADH dehydrogenase [ubiquinone] 1 alpha subcomplex subunit 9, mitochondrial from Arabidopsis thaliana (Mouse-ear cress).